Reading from the N-terminus, the 289-residue chain is Methionyl-tRNA formyltransferase (289 aa).

Residue 106 to 109 participates in (6S)-5,6,7,8-tetrahydrofolate binding; sequence SLLP.

Belongs to the Fmt family.

The catalysed reaction is L-methionyl-tRNA(fMet) + (6R)-10-formyltetrahydrofolate = N-formyl-L-methionyl-tRNA(fMet) + (6S)-5,6,7,8-tetrahydrofolate + H(+). Its function is as follows. Attaches a formyl group to the free amino group of methionyl-tRNA(fMet). The formyl group appears to play a dual role in the initiator identity of N-formylmethionyl-tRNA by promoting its recognition by IF2 and preventing the misappropriation of this tRNA by the elongation apparatus. The protein is Methionyl-tRNA formyltransferase of Mycoplasmopsis pulmonis (strain UAB CTIP) (Mycoplasma pulmonis).